A 176-amino-acid chain; its full sequence is Large ribosomal subunit protein uL10 (176 aa).

This sequence belongs to the universal ribosomal protein uL10 family. Part of the ribosomal stalk of the 50S ribosomal subunit. The N-terminus interacts with L11 and the large rRNA to form the base of the stalk. The C-terminus forms an elongated spine to which L12 dimers bind in a sequential fashion forming a multimeric L10(L12)X complex.

Forms part of the ribosomal stalk, playing a central role in the interaction of the ribosome with GTP-bound translation factors. This chain is Large ribosomal subunit protein uL10, found in Dehalococcoides mccartyi (strain ATCC BAA-2100 / JCM 16839 / KCTC 5957 / BAV1).